A 141-amino-acid chain; its full sequence is VLTDAEKKEVTSLWGKASGHAEEYGAEALERLFLSFPTTKTYFSHMDLSKGSAQVKAHGKRVADALTTAAGHFNDMDSALSALSDLHAHKLRVDPVNFKLLAHCFLVVLARHHPAEFTPSAHAAMDKFLSRVATVLTSKYR.

Residues Val-1–Arg-141 form the Globin domain. His-58 is a binding site for O2. Position 87 (His-87) interacts with heme b.

Belongs to the globin family. Heterotetramer of two alpha chains and two beta chains. As to expression, red blood cells.

Its function is as follows. Involved in oxygen transport from the lung to the various peripheral tissues. The protein is Hemoglobin subunit alpha-1 of Tachyglossus aculeatus aculeatus (Southeast Australian short-beaked echidna).